We begin with the raw amino-acid sequence, 242 residues long: Octanoyltransferase (242 aa).

In terms of domain architecture, BPL/LPL catalytic spans Ser-31 to Gln-206. Substrate-binding positions include Arg-70–His-77, Ser-137–Gly-139, and Gly-150–Ala-152. Cys-168 (acyl-thioester intermediate) is an active-site residue.

It belongs to the LipB family.

It is found in the cytoplasm. It carries out the reaction octanoyl-[ACP] + L-lysyl-[protein] = N(6)-octanoyl-L-lysyl-[protein] + holo-[ACP] + H(+). The protein operates within protein modification; protein lipoylation via endogenous pathway; protein N(6)-(lipoyl)lysine from octanoyl-[acyl-carrier-protein]: step 1/2. Its function is as follows. Catalyzes the transfer of endogenously produced octanoic acid from octanoyl-acyl-carrier-protein onto the lipoyl domains of lipoate-dependent enzymes. Lipoyl-ACP can also act as a substrate although octanoyl-ACP is likely to be the physiological substrate. This is Octanoyltransferase from Coxiella burnetii (strain CbuK_Q154) (Coxiella burnetii (strain Q154)).